A 194-amino-acid chain; its full sequence is Fe/S biogenesis protein NfuA (194 aa).

The [4Fe-4S] cluster site is built by cysteine 151 and cysteine 154.

Belongs to the NfuA family. As to quaternary structure, homodimer. Requires [4Fe-4S] cluster as cofactor.

Functionally, involved in iron-sulfur cluster biogenesis. Binds a 4Fe-4S cluster, can transfer this cluster to apoproteins, and thereby intervenes in the maturation of Fe/S proteins. Could also act as a scaffold/chaperone for damaged Fe/S proteins. This Mannheimia succiniciproducens (strain KCTC 0769BP / MBEL55E) protein is Fe/S biogenesis protein NfuA.